The chain runs to 283 residues: Peflin (283 aa).

Tandem repeats lie at residues 21–30 (PQTNYYGGQQ), 36–44 (QPAASYGRP), 45–54 (APGAPYGSPP), 55–62 (SGGVYGHP), 71–79 (APGGPYGGQ), 80–87 (APGGPYSV), 88–95 (PGSTPYGS), and 96–104 (QQHGSYGQG). The segment at 21–104 (PQTNYYGGQQ…SQQHGSYGQG (84 aa)) is 8 X 9 AA approximate tandem repeat of [AP]-P-G-G-P-Y-G-G-P-P. Over residues 37-70 (PAASYGRPAPGAPYGSPPSGGVYGHPVPGSAAPG) the composition is skewed to low complexity. The interval 37–113 (PAASYGRPAP…GAPAGNIPPG (77 aa)) is disordered. Residues 71 to 81 (APGGPYGGQAP) show a composition bias toward gly residues. The span at 93-104 (YGSQQHGSYGQG) shows a compositional bias: low complexity. EF-hand domains are found at residues 113-148 (GVDP…TNWS), 154-179 (TCTM…SALW), 180-215 (RFIQ…MGYQ), 216-252 (LSPQ…LQSM), and 253-282 (TEAF…TTRL). The Ca(2+) site is built by Asp126, Asp128, Ser130, Tyr132, and Glu137. Asp193, Asp195, Ser197, Ser199, and Glu204 together coordinate Ca(2+).

Heterodimer; heterodimerizes (via the EF-hand 5) with pdcd6.

It localises to the cytoplasm. The protein resides in the endoplasmic reticulum. It is found in the membrane. Its subcellular location is the cytoplasmic vesicle. The protein localises to the COPII-coated vesicle membrane. In terms of biological role, calcium-binding protein that acts as an adapter that bridges unrelated proteins or stabilizes weak protein-protein complexes in response to calcium. Acts as a negative regulator of ER-Golgi transport. In Xenopus laevis (African clawed frog), this protein is Peflin.